We begin with the raw amino-acid sequence, 483 residues long: PAT complex subunit CCDC47 (483 aa).

A signal peptide spans 1–20 (MKAFYAFCVVLLVFGSVSEA). Over 21-135 (KFDDFEDEED…PAHLQNSWES (115 aa)) the chain is Cytoplasmic. Residues 46 to 119 (MEDSVTESPQ…DTSSNKNKDP (74 aa)) form a disordered region. Acidic residues predominate over residues 60-104 (TEDDEDEATVELEGQDESQEGDFEDADTQEGDTESEPYDDEEFEG). The span at 105–118 (YEDKPDTSSNKNKD) shows a compositional bias: basic and acidic residues. The chain crosses the membrane as a helical span at residues 136–156 (YYLEILMVTGLLAYIMNYIIG). Residues 157-483 (KNKNSRLAQA…KMKQIKVKAM (327 aa)) lie on the Lumenal side of the membrane. The N-linked (GlcNAc...) asparagine glycan is linked to Asn-178. A disordered region spans residues 424–483 (QRQEAAQSRREEKKRAEKERIMNEEDPEKQRRLEEAALRREQKKLEKKQMKMKQIKVKAM). The span at 430–472 (QSRREEKKRAEKERIMNEEDPEKQRRLEEAALRREQKKLEKKQ) shows a compositional bias: basic and acidic residues. Positions 450 to 483 (PEKQRRLEEAALRREQKKLEKKQMKMKQIKVKAM) form a coiled coil. Basic residues predominate over residues 473 to 483 (MKMKQIKVKAM).

This sequence belongs to the CCDC47 family. In terms of assembly, component of the PAT complex, composed of WDR83OS/Asterix and CCDC47. The PAT complex is part of the multi-pass translocon (MPT) complex, composed of three subcomplexes, the GEL complex (composed of RAB5IF/OPTI and TMCO1), the BOS complex (composed of NCLN/Nicalin, NOMO1 and TMEM147) and the PAT complex (composed of WDR83OS/Asterix and CCDC47). The MPT complex associates with the SEC61 complex. Interacts with VCP, HSPA5, DERL1, DERL2 and SELENOS. In the embryo, expressed in the endodermal layer of the yolk sac and in the small intestine.

It is found in the endoplasmic reticulum membrane. The protein resides in the rough endoplasmic reticulum membrane. Component of the multi-pass translocon (MPT) complex that mediates insertion of multi-pass membrane proteins into the lipid bilayer of membranes. The MPT complex takes over after the SEC61 complex: following membrane insertion of the first few transmembrane segments of proteins by the SEC61 complex, the MPT complex occludes the lateral gate of the SEC61 complex to promote insertion of subsequent transmembrane regions. Within the MPT complex, the PAT subcomplex sequesters any highly polar regions in the transmembrane domains away from the non-polar membrane environment until they can be buried in the interior of the fully assembled protein. Within the PAT subcomplex, CCDC47 occludes the lateral gate of the SEC61 complex. Involved in the regulation of calcium ion homeostasis in the ER. Required for proper protein degradation via the ERAD (ER-associated degradation) pathway. Has an essential role in the maintenance of ER organization during embryogenesis. This Mus musculus (Mouse) protein is PAT complex subunit CCDC47.